The sequence spans 204 residues: Pyrrolidone-carboxylate peptidase (204 aa).

Residues E78, C141, and H165 contribute to the active site.

It belongs to the peptidase C15 family. Homotetramer.

The protein localises to the cytoplasm. It catalyses the reaction Release of an N-terminal pyroglutamyl group from a polypeptide, the second amino acid generally not being Pro.. Removes 5-oxoproline from various penultimate amino acid residues except L-proline. The polypeptide is Pyrrolidone-carboxylate peptidase (Levilactobacillus brevis (strain ATCC 367 / BCRC 12310 / CIP 105137 / JCM 1170 / LMG 11437 / NCIMB 947 / NCTC 947) (Lactobacillus brevis)).